Consider the following 336-residue polypeptide: 3-isopropylmalate dehydrogenase (336 aa).

4 residues coordinate substrate: R87, R97, R121, and D211. Residues D211, D235, and D239 each coordinate Mg(2+). Residue 271 to 283 coordinates NAD(+); the sequence is GSAPDIAGQGIAD.

Belongs to the isocitrate and isopropylmalate dehydrogenases family. LeuB type 2 subfamily. In terms of assembly, homodimer. Mg(2+) is required as a cofactor. Mn(2+) serves as cofactor.

The protein localises to the cytoplasm. The enzyme catalyses (2R,3S)-3-isopropylmalate + NAD(+) = 4-methyl-2-oxopentanoate + CO2 + NADH. The protein operates within amino-acid biosynthesis; L-leucine biosynthesis; L-leucine from 3-methyl-2-oxobutanoate: step 3/4. Catalyzes the oxidation of 3-carboxy-2-hydroxy-4-methylpentanoate (3-isopropylmalate) to 3-carboxy-4-methyl-2-oxopentanoate. The product decarboxylates to 4-methyl-2 oxopentanoate. The chain is 3-isopropylmalate dehydrogenase (leuB) from Mycobacterium tuberculosis (strain CDC 1551 / Oshkosh).